Reading from the N-terminus, the 391-residue chain is ATP phosphoribosyltransferase regulatory subunit (391 aa).

It belongs to the class-II aminoacyl-tRNA synthetase family. HisZ subfamily. As to quaternary structure, heteromultimer composed of HisG and HisZ subunits.

The protein resides in the cytoplasm. It participates in amino-acid biosynthesis; L-histidine biosynthesis; L-histidine from 5-phospho-alpha-D-ribose 1-diphosphate: step 1/9. Its function is as follows. Required for the first step of histidine biosynthesis. May allow the feedback regulation of ATP phosphoribosyltransferase activity by histidine. This chain is ATP phosphoribosyltransferase regulatory subunit, found in Prochlorococcus marinus (strain NATL2A).